Consider the following 344-residue polypeptide: Centromere protein N (344 aa).

It belongs to the CENP-N/CHL4 family.

Its subcellular location is the nucleus. It localises to the chromosome. The protein localises to the centromere. Functionally, probable component of a centromeric complex involved in assembly of kinetochore proteins, mitotic progression and chromosome segregation. The sequence is that of Centromere protein N (CENPN) from Gallus gallus (Chicken).